The following is a 544-amino-acid chain: Chaperonin GroEL (544 aa).

ATP is bound by residues 30–33 (TLGP), lysine 51, 87–91 (DGTTT), glycine 415, 479–481 (NAA), and aspartate 495.

It belongs to the chaperonin (HSP60) family. Forms a cylinder of 14 subunits composed of two heptameric rings stacked back-to-back. Interacts with the co-chaperonin GroES.

The protein resides in the cytoplasm. It catalyses the reaction ATP + H2O + a folded polypeptide = ADP + phosphate + an unfolded polypeptide.. In terms of biological role, together with its co-chaperonin GroES, plays an essential role in assisting protein folding. The GroEL-GroES system forms a nano-cage that allows encapsulation of the non-native substrate proteins and provides a physical environment optimized to promote and accelerate protein folding. The chain is Chaperonin GroEL from Francisella tularensis subsp. mediasiatica (strain FSC147).